The following is a 90-amino-acid chain: Molybdopterin synthase sulfur carrier subunit (90 aa).

Position 90 is a 1-thioglycine; alternate (Gly90). Gly90 bears the Glycyl adenylate; alternate mark.

It belongs to the MoaD family. MOCS2A subfamily. Heterotetramer; composed of 2 small (Mocs2A) and 2 large (Mocs2B) subunits. Post-translationally, C-terminal thiocarboxylation occurs in 2 steps, it is first acyl-adenylated (-COAMP) via the hesA/moeB/thiF part of MOCS3, then thiocarboxylated (-COSH) via the rhodanese domain of MOCS3.

The protein localises to the cytoplasm. It functions in the pathway cofactor biosynthesis; molybdopterin biosynthesis. Acts as a sulfur carrier required for molybdopterin biosynthesis. Component of the molybdopterin synthase complex that catalyzes the conversion of precursor Z into molybdopterin by mediating the incorporation of 2 sulfur atoms into precursor Z to generate a dithiolene group. In the complex, serves as sulfur donor by being thiocarboxylated (-COSH) at its C-terminus by MOCS3. After interaction with Mocs2B, the sulfur is then transferred to precursor Z to form molybdopterin. This is Molybdopterin synthase sulfur carrier subunit from Drosophila ananassae (Fruit fly).